The primary structure comprises 1085 residues: Solute carrier family 12 member 4 (1085 aa).

The Cytoplasmic segment spans residues 1–119 (MPHFTVVPVD…RRAAKAPSMG (119 aa)). Ser24 carries the phosphoserine modification. Residues 28–46 (YGERAEREDPDGHGNHRES) are compositionally biased toward basic and acidic residues. The interval 28–47 (YGERAEREDPDGHGNHRESS) is disordered. Phosphoserine is present on residues Ser47, Ser59, Ser81, and Ser88. The discontinuously helical transmembrane segment at 120-141 (TLMGVYLPCLQNIFGVILFLRL) threads the bilayer. K(+)-binding residues include Asn131 and Ile132. Over 142-149 (TWMVGTAG) the chain is Extracellular. The helical transmembrane segment at 150–172 (VLQALLIVLICCCCTLLTAISMS) threads the bilayer. The Cytoplasmic portion of the chain corresponds to 173–196 (AIATNGVVPAGGSYFMISRSLGPE). The helical transmembrane segment at 197 to 225 (FGGAVGLCFYLGTTFAAAMYILGAIEILL) threads the bilayer. Position 216 (Tyr216) interacts with K(+). Topologically, residues 226 to 248 (TYIAPPAAIFYPSGTHDTSNATL) are extracellular. An N-linked (GlcNAc...) asparagine glycan is attached at Asn245. The next 2 membrane-spanning stretches (helical) occupy residues 249–271 (NNMRVYGTVFLSFMTLVVFVGVK) and 272–297 (YVNKFASLFLACVIISILSIYAGGIK). Topologically, residues 298-419 (SMFDPPVFPV…LYVVADIATS (122 aa)) are extracellular. Cys308 and Cys323 are joined by a disulfide. N-linked (GlcNAc...) asparagine glycosylation is found at Asn312, Asn331, and Asn347. Cys343 and Cys353 form a disulfide bridge. The chain crosses the membrane as a helical span at residues 420–440 (FTVLVGIFFPSVTGIMAGSNR). Pro429 and Thr432 together coordinate K(+). 3 residues coordinate chloride: Gly433, Ile434, and Met435. Residues 441-450 (SGDLRDAQKS) lie on the Cytoplasmic side of the membrane. The helical transmembrane segment at 451-473 (IPVGTILAIVTTSLVYFSSVVLF) threads the bilayer. The Extracellular segment spans residues 474–504 (GACIEGVVLRDKYGDGVSRNLVVGTLAWPSP). A helical membrane pass occupies residues 505–531 (WVIVVGSFFSTCGAGLQSLTGAPRLLQ). Topologically, residues 532–554 (AIAKDNIIPFLRVFGHGKANGEP) are cytoplasmic. The next 2 helical transmembrane spans lie at 555-575 (TWALLLTALIAELGILIASLD) and 576-598 (MVAPILSMFFLMCYLFVNLACAV). Residue Tyr589 coordinates chloride. The Cytoplasmic segment spans residues 599–612 (QTLLRTPNWRPRFK). The next 2 membrane-spanning stretches (helical) occupy residues 613–635 (YYHWALSFLGMSLCLALMFVSSW) and 636–651 (YYALVAMLIAGMIYKY). At 652–1085 (IEYQGAEKEW…GGREVITIYS (434 aa)) the chain is on the cytoplasmic side. Residues 665 to 681 (IRGLSLSAARYALLRLE) are scissor helix. The ATP site is built by Leu697, Lys699, Lys707, Tyr708, and Val730. A Phosphoserine modification is found at Ser734. ATP is bound by residues Gly794, Trp795, and Tyr797. Residues Ser916 and Ser967 each carry the phosphoserine modification. At Thr983 the chain carries Phosphothreonine. Ser1050 carries the phosphoserine modification.

Belongs to the SLC12A transporter family. K/Cl co-transporter subfamily. Homodimer; adopts a domain-swap conformation at the scissor helices connecting the transmembrane domain and C-terminal domain. Heterodimer with other K-Cl cotransporters. N-glycosylated. In terms of processing, phosphorylated, phosphorylation may regulate transporter activity.

The protein localises to the cell membrane. The enzyme catalyses K(+)(in) + chloride(in) = K(+)(out) + chloride(out). Inhibited by WNK3. Its function is as follows. Mediates electroneutral potassium-chloride cotransport when activated by cell swelling. May contribute to cell volume homeostasis in single cells. May be involved in the regulation of basolateral Cl(-) exit in NaCl absorbing epithelia. In Oryctolagus cuniculus (Rabbit), this protein is Solute carrier family 12 member 4 (SLC12A4).